A 255-amino-acid chain; its full sequence is Hydroxyacylglutathione hydrolase (255 aa).

Residues His53, His55, Asp57, His58, His110, Asp127, and His165 each contribute to the Zn(2+) site.

Belongs to the metallo-beta-lactamase superfamily. Glyoxalase II family. In terms of assembly, monomer. It depends on Zn(2+) as a cofactor.

It catalyses the reaction an S-(2-hydroxyacyl)glutathione + H2O = a 2-hydroxy carboxylate + glutathione + H(+). The protein operates within secondary metabolite metabolism; methylglyoxal degradation; (R)-lactate from methylglyoxal: step 2/2. In terms of biological role, thiolesterase that catalyzes the hydrolysis of S-D-lactoyl-glutathione to form glutathione and D-lactic acid. The chain is Hydroxyacylglutathione hydrolase from Xanthomonas axonopodis pv. citri (strain 306).